A 578-amino-acid polypeptide reads, in one-letter code: Peptidyl-prolyl cis-trans isomerase-like 2 (578 aa).

The region spanning 40–114 is the U-box domain; it reads RRLPFNFCAA…SDSLGAGLSD (75 aa). The interval 240–260 is disordered; the sequence is KAREQGGDVNRSSTALTKPTG. The PPIase cyclophilin-type domain occupies 321–475; sequence ATGFARMETN…NKILIKDIVI (155 aa). Residues 505–578 form a disordered region; the sequence is GTDDDKTTWT…GGGFGNFDNW (74 aa). Positions 538–548 are enriched in polar residues; the sequence is KTTTQQSTPTV. Positions 551 to 560 are enriched in acidic residues; it reads ADLEDVDTWE. Residues 569–578 show a composition bias toward gly residues; sequence GGGFGNFDNW.

The protein belongs to the cyclophilin-type PPIase family. PPIL2 subfamily.

It is found in the nucleus. The enzyme catalyses [protein]-peptidylproline (omega=180) = [protein]-peptidylproline (omega=0). It carries out the reaction S-ubiquitinyl-[E2 ubiquitin-conjugating enzyme]-L-cysteine + [acceptor protein]-L-lysine = [E2 ubiquitin-conjugating enzyme]-L-cysteine + N(6)-ubiquitinyl-[acceptor protein]-L-lysine.. Its pathway is protein modification; protein ubiquitination. In terms of biological role, may catalyze the cis-trans isomerization of proline imidic peptide bonds in oligopeptides thereby assisting the folding of proteins. May also function as a chaperone, playing a role in intracellular transport of proteins. May also have a protein ubiquitin ligase activity acting as an E3 ubiquitin protein ligase or as a ubiquitin-ubiquitin ligase promoting elongation of ubiquitin chains on proteins. This chain is Peptidyl-prolyl cis-trans isomerase-like 2 (CYP8), found in Gibberella zeae (strain ATCC MYA-4620 / CBS 123657 / FGSC 9075 / NRRL 31084 / PH-1) (Wheat head blight fungus).